Consider the following 436-residue polypeptide: GTPase Der (436 aa).

EngA-type G domains follow at residues 4 to 167 (PTVA…PVEE) and 175 to 351 (IRFS…ESQN). Residues 10–17 (GRPNVGKS), 57–61 (DTGGI), 119–122 (NKVD), 181–188 (GRPNVGKS), 229–233 (DTAGM), and 294–297 (NKWD) each bind GTP. The KH-like domain occupies 352 to 436 (KRIPSAVLND…PIHLIARKRK (85 aa)).

This sequence belongs to the TRAFAC class TrmE-Era-EngA-EngB-Septin-like GTPase superfamily. EngA (Der) GTPase family. Associates with the 50S ribosomal subunit.

Its function is as follows. GTPase that plays an essential role in the late steps of ribosome biogenesis. This chain is GTPase Der, found in Streptococcus pyogenes serotype M28 (strain MGAS6180).